Consider the following 455-residue polypeptide: uncharacterized protein (455 aa).

The N-terminal stretch at 1-24 (MKTTKILLHTGVLALSLLATQVMA) is a signal peptide.

This is an uncharacterized protein from Pseudomonas aeruginosa (strain ATCC 15692 / DSM 22644 / CIP 104116 / JCM 14847 / LMG 12228 / 1C / PRS 101 / PAO1).